Reading from the N-terminus, the 826-residue chain is Ribonucleases P/MRP protein subunit POP1 (826 aa).

2 disordered regions span residues 1–24 (MATT…PRKI) and 49–91 (NKDF…SGGD). The Nuclear localization signal motif lies at 58 to 65 (KRRRTNSY). Basic residues predominate over residues 70 to 79 (AKKRNIKRQK).

In terms of assembly, component of nuclear RNase P and RNase MRP ribonucleoproteins. RNase P consists of a catalytic RNA moiety and different protein chains. Several subunits of RNase P are also part of the RNase MRP complex. RNase MRP consists of a catalytic RNA moiety and several protein subunits.

Its subcellular location is the nucleus. The protein localises to the nucleolus. In terms of biological role, component of ribonuclease P, a ribonucleoprotein complex that generates mature tRNA molecules by cleaving their 5'-ends. Also a component of the MRP ribonuclease complex, which cleaves pre-rRNA sequences. Required for rRNA maturation, including 5.8S rRNA processing. This chain is Ribonucleases P/MRP protein subunit POP1, found in Arabidopsis thaliana (Mouse-ear cress).